We begin with the raw amino-acid sequence, 508 residues long: MLSLIIAACCVTVALAGTFSNPTCAPGRNTIVHLFEWKWTDIAKECERFLGPNGFCGVQISPPNENRLVNNRPWWERYQPVSYKLQTRSGSEDQLRDMISRCNRVNVRIYSDTVINHMTGVGGSGTGTAGSHWNGDTLSYPGVPFSAWDFNTGNECHSSDMNIHDYNNAEEIRNCRLVSLADLKLSKNYVREEITQYMNHLIDLGVAGFRIDAAKHMWPGDLRAMFGTLHDLNSAVFGSGRKPFIFQEVIDMGGEPISASEYTGIGRVTNFIFGVKLGQVFRNENKASNLHNWGEAWGMPNSNDVVVFIDNHDNQRGHGGGGGPLTHFEPRPYKLATAFMLAHPYGFTRLMSSYNFDRSNTDQGPPHNGDNINDVTINADLTCGNGWTCEHRWREIYNMVAFRNIVMGQNLQHWWDNGNYQIAFGRGNKGFIAMNMDNHNLDQTLQTGLPAGTYCDVISGSYDGSSCSGTEIQVGNDGNAHFSISNSSDDPMIAIHVGAKKGQPKVTT.

Residues 1 to 19 (MLSLIIAACCVTVALAGTF) form the signal peptide. Residues Cys46 and Cys102 are joined by a disulfide bond. Residues Asn116, Arg173, and Asp182 each coordinate Ca(2+). A disulfide bridge links Cys156 with Cys175. Arg210 serves as a coordination point for chloride. Asp212 acts as the Nucleophile in catalysis. Position 216 (His216) interacts with Ca(2+). The Proton donor role is filled by Glu248. Residues Asn311 and Arg349 each contribute to the chloride site. 2 disulfide bridges follow: Cys383–Cys389 and Cys455–Cys467.

It belongs to the glycosyl hydrolase 13 family. Monomer. Requires Ca(2+) as cofactor. Chloride serves as cofactor.

The catalysed reaction is Endohydrolysis of (1-&gt;4)-alpha-D-glucosidic linkages in polysaccharides containing three or more (1-&gt;4)-alpha-linked D-glucose units.. In Pecten maximus (King scallop), this protein is Alpha-amylase.